A 553-amino-acid polypeptide reads, in one-letter code: Dihydroxy-acid dehydratase 1 (553 aa).

Asp78 is a binding site for Mg(2+). Residue Cys119 coordinates [2Fe-2S] cluster. Mg(2+) is bound by residues Asp120 and Lys121. Position 121 is an N6-carboxylysine (Lys121). [2Fe-2S] cluster is bound at residue Cys191. Glu444 contributes to the Mg(2+) binding site. Ser470 serves as the catalytic Proton acceptor.

The protein belongs to the IlvD/Edd family. In terms of assembly, homodimer. The cofactor is [2Fe-2S] cluster. It depends on Mg(2+) as a cofactor.

It catalyses the reaction (2R)-2,3-dihydroxy-3-methylbutanoate = 3-methyl-2-oxobutanoate + H2O. The catalysed reaction is (2R,3R)-2,3-dihydroxy-3-methylpentanoate = (S)-3-methyl-2-oxopentanoate + H2O. It participates in amino-acid biosynthesis; L-isoleucine biosynthesis; L-isoleucine from 2-oxobutanoate: step 3/4. It functions in the pathway amino-acid biosynthesis; L-valine biosynthesis; L-valine from pyruvate: step 3/4. In terms of biological role, functions in the biosynthesis of branched-chain amino acids. Catalyzes the dehydration of (2R,3R)-2,3-dihydroxy-3-methylpentanoate (2,3-dihydroxy-3-methylvalerate) into 2-oxo-3-methylpentanoate (2-oxo-3-methylvalerate) and of (2R)-2,3-dihydroxy-3-methylbutanoate (2,3-dihydroxyisovalerate) into 2-oxo-3-methylbutanoate (2-oxoisovalerate), the penultimate precursor to L-isoleucine and L-valine, respectively. This chain is Dihydroxy-acid dehydratase 1, found in Methanosarcina acetivorans (strain ATCC 35395 / DSM 2834 / JCM 12185 / C2A).